The chain runs to 361 residues: G kinase-anchoring protein 1-A (361 aa).

Disordered regions lie at residues 22 to 111 (DSSS…EDWQ) and 140 to 183 (FEES…KDFQ). A compositionally biased stretch (low complexity) spans 35-48 (AHSSGKAHSGSAAR). The stretch at 51-79 (NKGNEKKKEKRRKKKEQQQSEANELRNLA) forms a coiled coil. Residues 158–168 (KVNKKDKRKNN) are compositionally biased toward basic residues. Coiled-coil stretches lie at residues 246–296 (KDGR…QEGE) and 326–346 (AALE…VKYQ).

The protein belongs to the GKAP1 family.

Its subcellular location is the golgi apparatus. In terms of biological role, may play a role in the regulation of insulin-dependent IRS1 tyrosine phosphorylation in adipocytes. In Xenopus laevis (African clawed frog), this protein is G kinase-anchoring protein 1-A (gkap1-a).